Here is a 63-residue protein sequence, read N- to C-terminus: Potassium channel toxin alpha-KTx 21.1 (63 aa).

Residues 1–27 (MQFSGVVLILISMTLVNFVFFETKVEA) form the signal peptide. 3 disulfide bridges follow: cysteine 33/cysteine 53, cysteine 38/cysteine 58, and cysteine 42/cysteine 60.

It belongs to the short scorpion toxin superfamily. Potassium channel inhibitor family. Alpha-KTx 21 subfamily. Expressed by the venom gland.

It localises to the secreted. Reversibly and voltage-independently blocks voltage-gated potassium channels rKv1.2/KCNA2 (73%) (IC(50)=196 nM), hKv1.3/KCNA3 (50%) (IC(50)=508 nM), Shaker IR (30%), rKv1.6/KCNA6 (22%) (at 0.5 uM). Interaction of Ts15 with Kv1.3/KCNA3 is stronger than its interaction with Kv1.2/KCNA2. This chain is Potassium channel toxin alpha-KTx 21.1, found in Tityus serrulatus (Brazilian scorpion).